Consider the following 1019-residue polypeptide: StAR-related lipid transfer protein 8 (1019 aa).

Disordered regions lie at residues Q92–K122 and S134–T154. Residues S100 to G115 are compositionally biased toward polar residues. Phosphoserine is present on S108. A compositionally biased stretch (basic and acidic residues) spans S134 to E147. An Asymmetric dimethylarginine modification is found at R168. A phosphoserine mark is found at S234 and S237. Disordered stretches follow at residues M325–T355 and A406–S482. Positions K334 to A347 are enriched in acidic residues. 2 stretches are compositionally biased toward polar residues: residues N418–S430 and I437–N455. Phosphoserine is present on residues S494 and S502. In terms of domain architecture, Rho-GAP spans P569–F773. The interval D731–E754 is disordered. An START domain is found at A805 to A1013.

Binds both the SH2 and PTB domains of TNS1.

The protein resides in the cell junction. The protein localises to the focal adhesion. Accelerates GTPase activity of RHOA and CDC42, but not RAC1. Stimulates the hydrolysis of phosphatidylinositol 4,5-bisphosphate by PLCD1. The sequence is that of StAR-related lipid transfer protein 8 (Stard8) from Mus musculus (Mouse).